Consider the following 166-residue polypeptide: MSTNRPAHAKKAEIVAEIVSKIQSAQGVAIAEYKHLTVEQMSNLRRQALKQGIEVKIYKDSLVRRAVEELNLTELNEYLTQQNVFVFSNDDAIGAAKLVANFAKENEALKLKAGVYEGAAMDTAAIMEVATLPSKEDLYSMFASSLLYPLRQVMAVINAVADTKQD.

The protein belongs to the universal ribosomal protein uL10 family. As to quaternary structure, part of the ribosomal stalk of the 50S ribosomal subunit. The N-terminus interacts with L11 and the large rRNA to form the base of the stalk. The C-terminus forms an elongated spine to which L12 dimers bind in a sequential fashion forming a multimeric L10(L12)X complex.

Functionally, forms part of the ribosomal stalk, playing a central role in the interaction of the ribosome with GTP-bound translation factors. The polypeptide is Large ribosomal subunit protein uL10 (Mesoplasma florum (strain ATCC 33453 / NBRC 100688 / NCTC 11704 / L1) (Acholeplasma florum)).